Reading from the N-terminus, the 582-residue chain is Arginine--tRNA ligase (582 aa).

The short motif at 128–138 (PNLAKEMHVGH) is the 'HIGH' region element.

Belongs to the class-I aminoacyl-tRNA synthetase family. As to quaternary structure, monomer.

It is found in the cytoplasm. The catalysed reaction is tRNA(Arg) + L-arginine + ATP = L-arginyl-tRNA(Arg) + AMP + diphosphate. This Colwellia psychrerythraea (strain 34H / ATCC BAA-681) (Vibrio psychroerythus) protein is Arginine--tRNA ligase.